We begin with the raw amino-acid sequence, 129 residues long: MSNIPTELKYASSHEWIRKEEDGSYTVGITEHAQELLGDMVFVELPEVGDTVTAGDDCAVAESVKAASDIYAPISGEVIAVNEALEDSPELVNSDAYGEGWFFRVMPSDESEVDALLDAEGYQAVIDEE.

The region spanning 24-106 (SYTVGITEHA…YGEGWFFRVM (83 aa)) is the Lipoyl-binding domain. At lysine 65 the chain carries N6-lipoyllysine.

The protein belongs to the GcvH family. As to quaternary structure, the glycine cleavage system is composed of four proteins: P, T, L and H. It depends on (R)-lipoate as a cofactor.

Functionally, the glycine cleavage system catalyzes the degradation of glycine. The H protein shuttles the methylamine group of glycine from the P protein to the T protein. The chain is Glycine cleavage system H protein from Shewanella oneidensis (strain ATCC 700550 / JCM 31522 / CIP 106686 / LMG 19005 / NCIMB 14063 / MR-1).